The chain runs to 228 residues: Phosphoenolpyruvate guanylyltransferase (228 aa).

Residues Thr-148, Gly-164, and Ser-167 each coordinate phosphoenolpyruvate.

The protein belongs to the CofC family.

The enzyme catalyses phosphoenolpyruvate + GTP + H(+) = enolpyruvoyl-2-diphospho-5'-guanosine + diphosphate. It participates in cofactor biosynthesis; coenzyme F420 biosynthesis. Its function is as follows. Guanylyltransferase that catalyzes the activation of phosphoenolpyruvate (PEP) as enolpyruvoyl-2-diphospho-5'-guanosine, via the condensation of PEP with GTP. It is involved in the biosynthesis of coenzyme F420, a hydride carrier cofactor. The protein is Phosphoenolpyruvate guanylyltransferase of Thermomonospora curvata (strain ATCC 19995 / DSM 43183 / JCM 3096 / KCTC 9072 / NBRC 15933 / NCIMB 10081 / Henssen B9).